The following is a 223-amino-acid chain: Adenylate kinase (223 aa).

An ATP-binding site is contributed by 10–15 (GSGKGT). Residues 30–59 (ESGAIFRQHIGGGTELGKKAKEYIDRGDLV) form an NMP region. AMP is bound by residues serine 31, arginine 36, 57-59 (DLV), 84-87 (GFPR), and glutamine 91. Positions 125-164 (GRRLCKNDNNHPNNIFIDAIKPDGDVCRVCGGSLSARADD) are LID. An ATP-binding site is contributed by arginine 126. 2 residues coordinate AMP: arginine 161 and arginine 173. Glycine 209 provides a ligand contact to ATP.

This sequence belongs to the adenylate kinase family. In terms of assembly, monomer.

The protein localises to the cytoplasm. The enzyme catalyses AMP + ATP = 2 ADP. It participates in purine metabolism; AMP biosynthesis via salvage pathway; AMP from ADP: step 1/1. Its function is as follows. Catalyzes the reversible transfer of the terminal phosphate group between ATP and AMP. Plays an important role in cellular energy homeostasis and in adenine nucleotide metabolism. The sequence is that of Adenylate kinase from Nitratidesulfovibrio vulgaris (strain DSM 19637 / Miyazaki F) (Desulfovibrio vulgaris).